The following is a 225-amino-acid chain: uncharacterized protein (225 aa).

This is an uncharacterized protein from Amsacta moorei entomopoxvirus (AmEPV).